Reading from the N-terminus, the 72-residue chain is Conorfamide-Tx2 (72 aa).

The signal sequence occupies residues methionine 1–alanine 19. The propeptide occupies threonine 20–lysine 25. The segment at alanine 32 to arginine 39 is positively charged region crucial for activity against MRGPRX1 receptors. Isoleucine 43 carries the isoleucine amide modification. The propeptide occupies glycine 44–glutamine 72.

Belongs to the FARP (FMRFamide related peptide) family. Expressed by the venom duct.

Its subcellular location is the secreted. In terms of biological role, this peptide activates human sensory neuron-specific G-protein coupled receptors MRGPRX1, but not mouse receptors (EC(50)=0.54 uM). Compared with the agonist chloroquine (anti-malaria drug), it is 600-fold more potent. In vivo, induces itch sensation, since intradermal cheek injection into humanized transgenic mouse (mouse MRGPRX1 replaced by human MRGPRX1) induces scratching. In vivo, treatment of zebrafish larvae with high doses (10 uM) induces hypoactivity at the beginning of the experiment during the dark phase and hyperactivity in the strobe phase after one hour, even after the removal of the toxin from the solution. This chain is Conorfamide-Tx2, found in Conus textile (Cloth-of-gold cone).